A 117-amino-acid polypeptide reads, in one-letter code: Large ribosomal subunit protein uL18 (117 aa).

It belongs to the universal ribosomal protein uL18 family. Part of the 50S ribosomal subunit; part of the 5S rRNA/L5/L18/L25 subcomplex. Contacts the 5S and 23S rRNAs.

Its function is as follows. This is one of the proteins that bind and probably mediate the attachment of the 5S RNA into the large ribosomal subunit, where it forms part of the central protuberance. In Acidithiobacillus ferrooxidans (strain ATCC 23270 / DSM 14882 / CIP 104768 / NCIMB 8455) (Ferrobacillus ferrooxidans (strain ATCC 23270)), this protein is Large ribosomal subunit protein uL18.